Reading from the N-terminus, the 109-residue chain is Cell division protein ZapA (109 aa).

Residues 22-99 (EQQDALNMAA…IEQALLEQGR (78 aa)) are a coiled coil.

It belongs to the ZapA family. Type 1 subfamily. As to quaternary structure, homodimer. Interacts with FtsZ.

The protein localises to the cytoplasm. Functionally, activator of cell division through the inhibition of FtsZ GTPase activity, therefore promoting FtsZ assembly into bundles of protofilaments necessary for the formation of the division Z ring. It is recruited early at mid-cell but it is not essential for cell division. The sequence is that of Cell division protein ZapA from Yersinia enterocolitica serotype O:8 / biotype 1B (strain NCTC 13174 / 8081).